Reading from the N-terminus, the 315-residue chain is Methionyl-tRNA formyltransferase (315 aa).

A (6S)-5,6,7,8-tetrahydrofolate-binding site is contributed by 114–117 (SLLP).

Belongs to the Fmt family.

The catalysed reaction is L-methionyl-tRNA(fMet) + (6R)-10-formyltetrahydrofolate = N-formyl-L-methionyl-tRNA(fMet) + (6S)-5,6,7,8-tetrahydrofolate + H(+). In terms of biological role, attaches a formyl group to the free amino group of methionyl-tRNA(fMet). The formyl group appears to play a dual role in the initiator identity of N-formylmethionyl-tRNA by promoting its recognition by IF2 and preventing the misappropriation of this tRNA by the elongation apparatus. This is Methionyl-tRNA formyltransferase from Corynebacterium glutamicum (strain R).